A 65-amino-acid chain; its full sequence is Large ribosomal subunit protein bL35 (65 aa).

It belongs to the bacterial ribosomal protein bL35 family.

This is Large ribosomal subunit protein bL35 from Parasynechococcus marenigrum (strain WH8102).